The chain runs to 207 residues: Suppressor of IKBKE 1 (207 aa).

Coiled coils occupy residues histidine 70–glutamate 102 and glutamine 162–alanine 193.

It belongs to the SIKE family. In terms of assembly, interacts with IKBKE and TBK1 via its coiled coil region. Interaction with TBK1 is disrupted upon viral infection or TLR3 stimulation. Interacts with CDC42BPB. Interacts with SIKE1 which mediates association with the STRIPAK core complex composed of PP2A catalytic and scaffolding subunits, the striatins (PP2A regulatory subunits), the striatin-associated proteins MOB4, STRIP1 and STRIP2, PDCD10 and members of the STE20 kinases, such as STK24 and STK26. As to expression, widely expressed. Expressed in brain, heart, skeletal muscle, colon, thymus, spleen, kidney, liver, small intestine, placenta, lung and leukocytes. Present in all cell lines tested (at protein level).

The protein resides in the cytoplasm. Its function is as follows. Physiological suppressor of IKK-epsilon and TBK1 that plays an inhibitory role in virus- and TLR3-triggered IRF3. Inhibits TLR3-mediated activation of interferon-stimulated response elements (ISRE) and the IFN-beta promoter. May act by disrupting the interactions of IKBKE or TBK1 with TICAM1/TRIF, IRF3 and RIGI. Does not inhibit NF-kappa-B activation pathways. Associates with the striatin-interacting phosphatase and kinase (STRIPAK) core complex, forming the extended (SIKE1:SLMAP)STRIPAK complex. The (SIKE1:SLMAP)STRIPAK complex dephosphorylates STK3 leading to the inhibition of Hippo signaling and the control of cell growth. This chain is Suppressor of IKBKE 1, found in Homo sapiens (Human).